Here is a 432-residue protein sequence, read N- to C-terminus: DNA damage-binding protein 2 (432 aa).

The disordered stretch occupies residues 1-31 (MAPKKCPETQKSPDVAVLLRSKSRRGPQELE). N6-acetyllysine is present on residues Lys-35 and Lys-77. 2 required for interaction with DDB1 regions span residues 68–79 (SIVRDLYQHKLG) and 87–98 (QQGLQKSFLHSL). 5 WD repeats span residues 116-151 (SLAW…IFLK), 159-194 (ITGL…LRVY), 203-238 (WFCS…LWNL), 244-287 (KVAH…SLPH), and 290-329 (PVNA…LISH). A DWD box motif is present at residues 256–274 (WLLATASIDQTVKIWDLRQ). The tract at residues 334–336 (FQH) is photolesion recognition. 2 WD repeats span residues 343–386 (TWHS…MCQL) and 396–420 (SLNE…IWSQ).

The protein belongs to the WD repeat DDB2/WDR76 family. Component of the UV-DDB complex which includes DDB1 and DDB2. The UV-DDB complex interacts with monoubiquitinated histone H2A and binds to XPC via the DDB2 subunit. Component of the DCX (DDB1-CUL4-X-box) E3 ubiquitin-protein ligase complex DDB1-CUL4-ROC1 (also known as CUL4-DDB-ROC1 and CUL4-DDB-RBX1), which includes CUL4A or CUL4B, DDB1, DDB2 and RBX1. DDB2 may function as the substrate recognition module within this complex. The DDB1-CUL4-ROC1 complex may associate with the COP9 signalosome, and this inhibits the E3 ubiquitin-protein ligase activity of the complex. A large number of other DCX complexes may also exist in which an alternate substrate targeting subunit replaces DDB2. These targeting subunits are generally known as DCAF (DDB1- and CUL4-associated factor) or CDW (CUL4-DDB1-associated WD40-repeat) proteins. In terms of processing, phosphorylation by ABL1 negatively regulate UV-DDB activity. Ubiquitinated by CUL4A in response to UV irradiation. Ubiquitination appears to both impair DNA-binding and promotes ubiquitin-dependent proteolysis. Degradation of DDB2 at sites of DNA damage may be a prerequisite for their recognition by XPC and subsequent repair. CUL4A-mediated degradation appears to be promoted by ABL1. Post-translationally, ubiquitinated, leading to proteasomal degradation, and deubiquitinated by USP24. Deubiquitinated by USP44; leading to its stabilization on DNA lesions. In terms of processing, acetylated. Deacetylation by SIRT6 in response to UV stress facilitates nucleotide excision repair pathway (the NER pathway) transduction. In terms of tissue distribution, expressed in bone marrow, liver, lung, muscle, pancreas and spleen.

Its subcellular location is the nucleus. It localises to the chromosome. It participates in protein modification; protein ubiquitination. In terms of biological role, protein, which is both involved in DNA repair and protein ubiquitination, as part of the UV-DDB complex and DCX (DDB1-CUL4-X-box) complexes, respectively. Core component of the UV-DDB complex (UV-damaged DNA-binding protein complex), a complex that recognizes UV-induced DNA damage and recruit proteins of the nucleotide excision repair pathway (the NER pathway) to initiate DNA repair. The UV-DDB complex preferentially binds to cyclobutane pyrimidine dimers (CPD), 6-4 photoproducts (6-4 PP), apurinic sites and short mismatches. Also functions as the substrate recognition module for the DCX (DDB2-CUL4-X-box) E3 ubiquitin-protein ligase complex DDB2-CUL4-ROC1 (also known as CUL4-DDB-ROC1 and CUL4-DDB-RBX1). The DDB2-CUL4-ROC1 complex may ubiquitinate histone H2A, histone H3 and histone H4 at sites of UV-induced DNA damage. The ubiquitination of histones may facilitate their removal from the nucleosome and promote subsequent DNA repair. The DDB2-CUL4-ROC1 complex also ubiquitinates XPC, which may enhance DNA-binding by XPC and promote NER. The DDB2-CUL4-ROC1 complex also ubiquitinates KAT7/HBO1 in response to DNA damage, leading to its degradation: recognizes KAT7/HBO1 following phosphorylation by ATR. The protein is DNA damage-binding protein 2 (Ddb2) of Mus musculus (Mouse).